A 339-amino-acid polypeptide reads, in one-letter code: Ribosomal RNA small subunit methyltransferase H (339 aa).

Residues 36–38 (GGY), aspartate 55, phenylalanine 82, aspartate 103, and glutamine 110 each bind S-adenosyl-L-methionine. The interval 286–319 (GPIGPSEAEATANPRARSAKLRAGERTDAPIPEP) is disordered.

The protein belongs to the methyltransferase superfamily. RsmH family.

The protein localises to the cytoplasm. It carries out the reaction cytidine(1402) in 16S rRNA + S-adenosyl-L-methionine = N(4)-methylcytidine(1402) in 16S rRNA + S-adenosyl-L-homocysteine + H(+). In terms of biological role, specifically methylates the N4 position of cytidine in position 1402 (C1402) of 16S rRNA. The protein is Ribosomal RNA small subunit methyltransferase H of Methylobacterium nodulans (strain LMG 21967 / CNCM I-2342 / ORS 2060).